The sequence spans 280 residues: Golgi to ER traffic protein 2 (280 aa).

Basic and acidic residues-rich tracts occupy residues 1–17, 44–62, and 71–80; these read MSLS…ERRQ, SALD…EAVK, and AKKESTAQAK. The segment at 1-80 is disordered; that stretch reads MSLSEAEKRK…AKKESTAQAK (80 aa). Over 1–146 the chain is Cytoplasmic; that stretch reads MSLSEAEKRK…VEYHKYRVNT (146 aa). Residues 147–166 form a helical membrane-spanning segment; it reads LTAKTTLVKWIVLLAYIFLL. At 167-191 the chain is on the lumenal side; it reads TRTDDTYFPFVVRSYLPEVFTSQSS. The helical transmembrane segment at 192–211 threads the bilayer; sequence FFSIFLTFEILATSIYYQLS. Over 212 to 258 the chain is Cytoplasmic; the sequence is VGVERETGVKTLQDTSKIVSLVSMVPEGILPIADLRGKVILAMKYWN. A helical transmembrane segment spans residues 259-279; that stretch reads IIAMMIGDVCFVLVAIGLVSQ. Position 280 (isoleucine 280) is a topological domain, lumenal.

It belongs to the GET2 family. As to quaternary structure, component of the Golgi to ER traffic (GET) complex, which is composed of GET1, GET2 and GET3. Within the complex, GET1 and GET2 form a heterotetramer which is stabilized by phosphatidylinositol binding and which binds to the GET3 homodimer.

It is found in the endoplasmic reticulum membrane. The protein localises to the golgi apparatus membrane. Functionally, required for the post-translational delivery of tail-anchored (TA) proteins to the endoplasmic reticulum. Together with GET1, acts as a membrane receptor for soluble GET3, which recognizes and selectively binds the transmembrane domain of TA proteins in the cytosol. The GET complex cooperates with the HDEL receptor ERD2 to mediate the ATP-dependent retrieval of resident ER proteins that contain a C-terminal H-D-E-L retention signal from the Golgi to the ER. The protein is Golgi to ER traffic protein 2 of Candida glabrata (strain ATCC 2001 / BCRC 20586 / JCM 3761 / NBRC 0622 / NRRL Y-65 / CBS 138) (Yeast).